Reading from the N-terminus, the 334-residue chain is Ketol-acid reductoisomerase (NADP(+)) (334 aa).

The KARI N-terminal Rossmann domain maps to 1–181; it reads MTTVYYDQDV…GATRAGVIET (181 aa). Residues 25-28, Arg48, Ser52, and 82-85 each bind NADP(+); these read YGSQ and DEIQ. Residue His107 is part of the active site. Gly133 is a binding site for NADP(+). Positions 182-327 constitute a KARI C-terminal knotted domain; the sequence is TFKEETETDL…RELREMMPFI (146 aa). The Mg(2+) site is built by Asp190, Glu194, Glu226, and Glu230. Ser251 lines the substrate pocket.

This sequence belongs to the ketol-acid reductoisomerase family. It depends on Mg(2+) as a cofactor.

It catalyses the reaction (2R)-2,3-dihydroxy-3-methylbutanoate + NADP(+) = (2S)-2-acetolactate + NADPH + H(+). The enzyme catalyses (2R,3R)-2,3-dihydroxy-3-methylpentanoate + NADP(+) = (S)-2-ethyl-2-hydroxy-3-oxobutanoate + NADPH + H(+). Its pathway is amino-acid biosynthesis; L-isoleucine biosynthesis; L-isoleucine from 2-oxobutanoate: step 2/4. The protein operates within amino-acid biosynthesis; L-valine biosynthesis; L-valine from pyruvate: step 2/4. Its function is as follows. Involved in the biosynthesis of branched-chain amino acids (BCAA). Catalyzes an alkyl-migration followed by a ketol-acid reduction of (S)-2-acetolactate (S2AL) to yield (R)-2,3-dihydroxy-isovalerate. In the isomerase reaction, S2AL is rearranged via a Mg-dependent methyl migration to produce 3-hydroxy-3-methyl-2-ketobutyrate (HMKB). In the reductase reaction, this 2-ketoacid undergoes a metal-dependent reduction by NADPH to yield (R)-2,3-dihydroxy-isovalerate. This is Ketol-acid reductoisomerase (NADP(+)) from Staphylococcus aureus (strain MSSA476).